Reading from the N-terminus, the 307-residue chain is 4-hydroxythreonine-4-phosphate dehydrogenase (307 aa).

The substrate site is built by His-126 and Thr-127. Residues His-156, His-195, and His-251 each contribute to the a divalent metal cation site. Residues Lys-259, Asn-268, and Arg-277 each contribute to the substrate site.

The protein belongs to the PdxA family. Homodimer. Requires Zn(2+) as cofactor. It depends on Mg(2+) as a cofactor. Co(2+) serves as cofactor.

It localises to the cytoplasm. It catalyses the reaction 4-(phosphooxy)-L-threonine + NAD(+) = 3-amino-2-oxopropyl phosphate + CO2 + NADH. The protein operates within cofactor biosynthesis; pyridoxine 5'-phosphate biosynthesis; pyridoxine 5'-phosphate from D-erythrose 4-phosphate: step 4/5. Functionally, catalyzes the NAD(P)-dependent oxidation of 4-(phosphooxy)-L-threonine (HTP) into 2-amino-3-oxo-4-(phosphooxy)butyric acid which spontaneously decarboxylates to form 3-amino-2-oxopropyl phosphate (AHAP). The polypeptide is 4-hydroxythreonine-4-phosphate dehydrogenase (Helicobacter pylori (strain J99 / ATCC 700824) (Campylobacter pylori J99)).